The sequence spans 55 residues: Large ribosomal subunit protein bL33 (55 aa).

It belongs to the bacterial ribosomal protein bL33 family.

The protein is Large ribosomal subunit protein bL33 of Chelativorans sp. (strain BNC1).